Reading from the N-terminus, the 216-residue chain is Superoxide dismutase [Cu-Zn], chloroplastic (216 aa).

Residues 1 to 62 (MACHSALAAV…ASPRSMVVVA (62 aa)) constitute a chloroplast transit peptide. His108, His110, and His125 together coordinate Cu cation. Cys119 and Cys208 are joined by a disulfide. 4 residues coordinate Zn(2+): His125, His133, His142, and Asp145. His182 contacts Cu cation.

This sequence belongs to the Cu-Zn superoxide dismutase family. In terms of assembly, homotetramer. Cu cation is required as a cofactor. Zn(2+) serves as cofactor.

It localises to the plastid. The protein resides in the chloroplast. The catalysed reaction is 2 superoxide + 2 H(+) = H2O2 + O2. In terms of biological role, destroys radicals which are normally produced within the cells and which are toxic to biological systems. The polypeptide is Superoxide dismutase [Cu-Zn], chloroplastic (SODCP) (Zantedeschia aethiopica (White calla lily)).